We begin with the raw amino-acid sequence, 306 residues long: Probable cobalamin biosynthesis protein CobD (306 aa).

The next 5 helical transmembrane spans lie at 54–74, 88–108, 155–175, 207–227, and 286–306; these read LFGF…AFEI, ISLY…IEFS, ITDS…PGAF, ILNF…APFY, and SLKA…ILFM.

It belongs to the CobD/CbiB family.

It is found in the cell membrane. Its pathway is cofactor biosynthesis; adenosylcobalamin biosynthesis. Its function is as follows. Converts cobyric acid to cobinamide by the addition of aminopropanol on the F carboxylic group. This Methanococcus maripaludis (strain DSM 14266 / JCM 13030 / NBRC 101832 / S2 / LL) protein is Probable cobalamin biosynthesis protein CobD.